We begin with the raw amino-acid sequence, 143 residues long: Nucleoside diphosphate kinase (143 aa).

Positions 11, 59, 87, 93, 104, and 114 each coordinate ATP. H117 (pros-phosphohistidine intermediate) is an active-site residue.

It belongs to the NDK family. In terms of assembly, homotetramer. Mg(2+) is required as a cofactor.

It is found in the cytoplasm. The catalysed reaction is a 2'-deoxyribonucleoside 5'-diphosphate + ATP = a 2'-deoxyribonucleoside 5'-triphosphate + ADP. It carries out the reaction a ribonucleoside 5'-diphosphate + ATP = a ribonucleoside 5'-triphosphate + ADP. Its function is as follows. Major role in the synthesis of nucleoside triphosphates other than ATP. The ATP gamma phosphate is transferred to the NDP beta phosphate via a ping-pong mechanism, using a phosphorylated active-site intermediate. The sequence is that of Nucleoside diphosphate kinase from Escherichia coli O81 (strain ED1a).